The primary structure comprises 250 residues: DNA repair protein RecO (250 aa).

This sequence belongs to the RecO family.

Involved in DNA repair and RecF pathway recombination. This Staphylococcus aureus (strain COL) protein is DNA repair protein RecO.